The following is a 157-amino-acid chain: uncharacterized protein (157 aa).

The N-acetyltransferase domain occupies 9-147 (LLINYKTLDE…DFYVWHPEVN (139 aa)).

This is an uncharacterized protein from Bacillus cereus (strain 03BB102).